Reading from the N-terminus, the 102-residue chain is Large ribosomal subunit protein bL21 (102 aa).

It belongs to the bacterial ribosomal protein bL21 family. In terms of assembly, part of the 50S ribosomal subunit. Contacts protein L20.

Its function is as follows. This protein binds to 23S rRNA in the presence of protein L20. This is Large ribosomal subunit protein bL21 from Nitratiruptor sp. (strain SB155-2).